Consider the following 137-residue polypeptide: Large-conductance mechanosensitive channel (137 aa).

2 consecutive transmembrane segments (helical) span residues 10-30 and 76-96; these read FAMR…AAFG and GVFI…FVAI.

It belongs to the MscL family. In terms of assembly, homopentamer.

The protein resides in the cell inner membrane. In terms of biological role, channel that opens in response to stretch forces in the membrane lipid bilayer. May participate in the regulation of osmotic pressure changes within the cell. The polypeptide is Large-conductance mechanosensitive channel (Salmonella typhimurium (strain LT2 / SGSC1412 / ATCC 700720)).